We begin with the raw amino-acid sequence, 329 residues long: uncharacterized protein (329 aa).

An N-terminal signal peptide occupies residues 1 to 32 (MSQDRGPRRPRRLEKCALISASATVLSLTASG). C33 carries the N-palmitoyl cysteine lipid modification. C33 carries the S-diacylglycerol cysteine lipid modification.

It localises to the cell membrane. This is an uncharacterized protein from Streptomyces coelicolor (strain ATCC BAA-471 / A3(2) / M145).